Consider the following 278-residue polypeptide: Protoheme IX farnesyltransferase (278 aa).

Transmembrane regions (helical) follow at residues 12 to 32 (VIWLLILSSVVGYVYAAGTVD), 36 to 56 (LAALTAAATLAVGGSAAFNHY), 72 to 92 (PLPAGAIPPSNALVYSLALSA), 105 to 124 (LPGVFVALGWFFYAVVYTVW), 130 to 150 (WLNILGGGFAGNATFLGGYAL), 157 to 177 (LPAVLISFAIYLWIPSHIWAL), 204 to 224 (AIISALNIASAAYILWLYLVF), 228 to 248 (LPGLALVLAGVAGTVATSALA), and 257 to 277 (MWRMYKASSPILTLFLLALVF).

Belongs to the UbiA prenyltransferase family. Protoheme IX farnesyltransferase subfamily.

The protein resides in the cell membrane. It catalyses the reaction heme b + (2E,6E)-farnesyl diphosphate + H2O = Fe(II)-heme o + diphosphate. The protein operates within porphyrin-containing compound metabolism; heme O biosynthesis; heme O from protoheme: step 1/1. Functionally, converts heme B (protoheme IX) to heme O by substitution of the vinyl group on carbon 2 of heme B porphyrin ring with a hydroxyethyl farnesyl side group. The polypeptide is Protoheme IX farnesyltransferase (Pyrobaculum neutrophilum (strain DSM 2338 / JCM 9278 / NBRC 100436 / V24Sta) (Thermoproteus neutrophilus)).